We begin with the raw amino-acid sequence, 79 residues long: uncharacterized protein (79 aa).

Positions 1–19 (MKYVALAFVLSLVILQISA) are cleaved as a signal peptide. Residues 52–71 (RGRKSRTQSGRNQGKSTSDS) are disordered. A compositionally biased stretch (polar residues) spans 58 to 71 (TQSGRNQGKSTSDS).

In terms of tissue distribution, nacreous layer of shell (at protein level). Expressed primarily in the mantle with highest level in the mantle pallium and lower level in the mantle edge.

Its subcellular location is the secreted. This is an uncharacterized protein from Margaritifera margaritifera (Freshwater pearl mussel).